A 445-amino-acid polypeptide reads, in one-letter code: MEKIKVALVSLGCDKNRIDSELMLYKLNEEAELVKDPKEAQVIIVNTCGFIETAKEESINTILQMASYKKTHNCKVLVVTGCLTQRYKGELKELIPEMDIMLGVNDYDKLLESIKVFLKSGEKSFYHKYSDTKINEGNRILTTPTYTAYVRIAEGCNNFCTYCAIPRIRGKYRSRKKENILKEVENLAKQGVKEIILIAQDTTMYGIDIHGKKVLHELLRDISKVEGVKWIRLLYCYPEEITEELIEEIKNNDKVCKYLDLPIQQISNSVLKRMGRKTTKETIINIIKKLRKEIEGITLRTSLIVGFPGETEGEFSELKEFVSDIKLDKLGVFKYSKEEGTSAALMEEQIDEEIKEKREEEIMILQQSISKDINKEKIGKIYEVIVEGIKEDMYYGRNYEMSPEIDGEIYFEKDENVKIGDIIKVKVTHSLEYDLIGVVYNELSK.

The MTTase N-terminal domain maps to 4-119; sequence IKVALVSLGC…LLESIKVFLK (116 aa). Cysteine 13, cysteine 48, cysteine 82, cysteine 156, cysteine 160, and cysteine 163 together coordinate [4Fe-4S] cluster. In terms of domain architecture, Radical SAM core spans 142-372; it reads TTPTYTAYVR…MILQQSISKD (231 aa). The 67-residue stretch at 375–441 folds into the TRAM domain; sequence KEKIGKIYEV…EYDLIGVVYN (67 aa).

The protein belongs to the methylthiotransferase family. RimO subfamily. [4Fe-4S] cluster is required as a cofactor.

It localises to the cytoplasm. It carries out the reaction L-aspartate(89)-[ribosomal protein uS12]-hydrogen + (sulfur carrier)-SH + AH2 + 2 S-adenosyl-L-methionine = 3-methylsulfanyl-L-aspartate(89)-[ribosomal protein uS12]-hydrogen + (sulfur carrier)-H + 5'-deoxyadenosine + L-methionine + A + S-adenosyl-L-homocysteine + 2 H(+). Functionally, catalyzes the methylthiolation of an aspartic acid residue of ribosomal protein uS12. This Clostridium botulinum (strain Loch Maree / Type A3) protein is Ribosomal protein uS12 methylthiotransferase RimO.